Here is a 777-residue protein sequence, read N- to C-terminus: Endonuclease MutS2 (777 aa).

328–335 (GPNTGGKT) contacts ATP. Positions 702-777 (LDIRGMNTLE…GDGATEVYLK (76 aa)) constitute a Smr domain.

It belongs to the DNA mismatch repair MutS family. MutS2 subfamily. In terms of assembly, homodimer. Binds to stalled ribosomes, contacting rRNA.

In terms of biological role, endonuclease that is involved in the suppression of homologous recombination and thus may have a key role in the control of bacterial genetic diversity. Its function is as follows. Acts as a ribosome collision sensor, splitting the ribosome into its 2 subunits. Detects stalled/collided 70S ribosomes which it binds and splits by an ATP-hydrolysis driven conformational change. Acts upstream of the ribosome quality control system (RQC), a ribosome-associated complex that mediates the extraction of incompletely synthesized nascent chains from stalled ribosomes and their subsequent degradation. Probably generates substrates for RQC. The polypeptide is Endonuclease MutS2 (Carboxydothermus hydrogenoformans (strain ATCC BAA-161 / DSM 6008 / Z-2901)).